The chain runs to 295 residues: Pyridoxal 5'-phosphate synthase subunit PdxS (295 aa).

D-ribose 5-phosphate is bound at residue aspartate 25. Lysine 82 functions as the Schiff-base intermediate with D-ribose 5-phosphate in the catalytic mechanism. Glycine 154 contributes to the D-ribose 5-phosphate binding site. Arginine 166 contacts D-glyceraldehyde 3-phosphate. D-ribose 5-phosphate-binding positions include glycine 215 and 236 to 237; that span reads GS.

Belongs to the PdxS/SNZ family. In terms of assembly, in the presence of PdxT, forms a dodecamer of heterodimers.

It catalyses the reaction aldehydo-D-ribose 5-phosphate + D-glyceraldehyde 3-phosphate + L-glutamine = pyridoxal 5'-phosphate + L-glutamate + phosphate + 3 H2O + H(+). It functions in the pathway cofactor biosynthesis; pyridoxal 5'-phosphate biosynthesis. Catalyzes the formation of pyridoxal 5'-phosphate from ribose 5-phosphate (RBP), glyceraldehyde 3-phosphate (G3P) and ammonia. The ammonia is provided by the PdxT subunit. Can also use ribulose 5-phosphate and dihydroxyacetone phosphate as substrates, resulting from enzyme-catalyzed isomerization of RBP and G3P, respectively. The protein is Pyridoxal 5'-phosphate synthase subunit PdxS of Listeria innocua serovar 6a (strain ATCC BAA-680 / CLIP 11262).